A 296-amino-acid chain; its full sequence is Enoyl-CoA hydratase AKT3-2 (296 aa).

The Peroxisomal targeting signal type 1 motif lies at 294-296 (PKL).

Belongs to the enoyl-CoA hydratase/isomerase family.

It is found in the peroxisome. The enzyme catalyses a (3S)-3-hydroxyacyl-CoA = a (2E)-enoyl-CoA + H2O. The catalysed reaction is a 4-saturated-(3S)-3-hydroxyacyl-CoA = a (3E)-enoyl-CoA + H2O. Its pathway is mycotoxin biosynthesis. Its function is as follows. Enoyl-CoA hydratase; part of the gene clusters that mediate the biosynthesis of the host-selective toxins (HSTs) AK-toxins responsible for Japanese pear black spot disease by the Japanese pear pathotype. AK-toxins are esters of 9,10-epoxy 8-hydroxy 9-methyldecatrienoic acid (EDA). On cellular level, AK-toxins affect plasma membrane of susceptible cells and cause a sudden increase in loss of K(+) after a few minutes of toxin treatment. The acyl-CoA ligase AKT1, the hydrolase AKT2 and enoyl-CoA hydratase AKT3 are all involved in the biosynthesis of the AK-, AF- and ACT-toxin common 9,10-epoxy-8-hydroxy-9-methyl-decatrienoic acid (EDA) structural moiety. Part of the EDA biosynthesis occurs in the peroxisome since these 3 enzymes are localized in peroxisomes. The exact roles of the 3 enzymes, as well as of additional AK-toxin clusters enzymes, including AKT4, AKT6 and AKTS1, have still to be elucidated. The Cytochrome P450 monooxygenase AKT7 on the other side functions to limit production of EDA and AK-toxin, probably via the catalysis of a side reaction of EDA or its precursor. The polypeptide is Enoyl-CoA hydratase AKT3-2 (Alternaria alternata (Alternaria rot fungus)).